The sequence spans 134 residues: UPF0412 protein YaaI (134 aa).

Residues M1–A23 form the signal peptide.

Belongs to the UPF0412 family.

The chain is UPF0412 protein YaaI from Salmonella agona (strain SL483).